Consider the following 149-residue polypeptide: Large ribosomal subunit protein uL13 (149 aa).

This sequence belongs to the universal ribosomal protein uL13 family. As to quaternary structure, part of the 50S ribosomal subunit.

Its function is as follows. This protein is one of the early assembly proteins of the 50S ribosomal subunit, although it is not seen to bind rRNA by itself. It is important during the early stages of 50S assembly. This is Large ribosomal subunit protein uL13 from Bifidobacterium adolescentis (strain ATCC 15703 / DSM 20083 / NCTC 11814 / E194a).